Here is an 84-residue protein sequence, read N- to C-terminus: RNA-binding protein Hfq (84 aa).

Residues 9-68 enclose the Sm domain; sequence DPYLNTLRKERVPVSIYLVNGIKLQGQIESFDQFVILLKNTVSQMVYKHAISTVVPGRPV.

It belongs to the Hfq family. In terms of assembly, homohexamer.

In terms of biological role, RNA chaperone that binds small regulatory RNA (sRNAs) and mRNAs to facilitate mRNA translational regulation in response to envelope stress, environmental stress and changes in metabolite concentrations. Also binds with high specificity to tRNAs. This chain is RNA-binding protein Hfq, found in Stutzerimonas stutzeri (strain A1501) (Pseudomonas stutzeri).